Reading from the N-terminus, the 184-residue chain is TATA-box-binding protein (184 aa).

Tandem repeats lie at residues 9–85 (IENI…IDKL) and 100–178 (VQNI…KKEL).

Belongs to the TBP family.

In terms of biological role, general factor that plays a role in the activation of archaeal genes transcribed by RNA polymerase. Binds specifically to the TATA box promoter element which lies close to the position of transcription initiation. This Thermoplasma volcanium (strain ATCC 51530 / DSM 4299 / JCM 9571 / NBRC 15438 / GSS1) protein is TATA-box-binding protein.